The chain runs to 369 residues: MKYKRIVFKVGTSSITHSDGSLSRGKIQTITRQLAALHHAGHELVLVSSGAVAAGFGALGFKKRPVKIADKQASAAVGQGLLMEEYTANLSSDGIVSAQILLSRADFADKRRYQNAGGALSVLLQRRAVPIINENDTVSVEELKIGDNDTLSAQVAAMIQADLLVLLTDIDGLYTGNPNSNPDAVRLDKIEHINHEIIEMAGGSGSANGTGGMLTKIKAATIAAESGVPVYICSSLKPDALAEAAEHQADGSFFVPRAKGLRTQKQWLAFYSESRGSVYVDEGAEHALSEQGKSLLMSGIAGIEGHFSRMDTVTVYSKATKQPLGKGRVLFGSAAAEDLLKSRKAKGVFIHRDDWISITPEIRLLLTEF.

An ATP-binding site is contributed by lysine 9. Serine 49, aspartate 136, and asparagine 148 together coordinate substrate. ATP is bound by residues 168-169 (TD) and 210-216 (TGGMLTK). The PUA domain occupies 275 to 355 (RGSVYVDEGA…KGVFIHRDDW (81 aa)).

The protein belongs to the glutamate 5-kinase family.

The protein localises to the cytoplasm. The catalysed reaction is L-glutamate + ATP = L-glutamyl 5-phosphate + ADP. It participates in amino-acid biosynthesis; L-proline biosynthesis; L-glutamate 5-semialdehyde from L-glutamate: step 1/2. Catalyzes the transfer of a phosphate group to glutamate to form L-glutamate 5-phosphate. This is Glutamate 5-kinase from Neisseria meningitidis serogroup C / serotype 2a (strain ATCC 700532 / DSM 15464 / FAM18).